Here is an 881-residue protein sequence, read N- to C-terminus: Putative outer membrane usher protein YfcU (881 aa).

Positions 1-29 are cleaved as a signal peptide; sequence MPDHSLFRLRILPWCIALAMSGSYSSVWA.

It belongs to the fimbrial export usher family.

It is found in the cell outer membrane. In terms of biological role, part of the yfcOPQRSUV fimbrial operon. Could contribute to adhesion to various surfaces in specific environmental niches. Increases adhesion to eukaryotic T24 bladder epithelial cells in the absence of fim genes. Probably involved in the export and assembly of fimbrial subunits across the outer membrane. In Escherichia coli (strain K12), this protein is Putative outer membrane usher protein YfcU (yfcU).